A 544-amino-acid chain; its full sequence is Chaperonin GroEL 1 (544 aa).

Residues 29 to 32, 86 to 90, G413, and D495 each bind ATP; these read TLGP and DGTTT.

The protein belongs to the chaperonin (HSP60) family. Forms a cylinder of 14 subunits composed of two heptameric rings stacked back-to-back. Interacts with the co-chaperonin GroES.

The protein resides in the cytoplasm. It carries out the reaction ATP + H2O + a folded polypeptide = ADP + phosphate + an unfolded polypeptide.. Its function is as follows. Together with its co-chaperonin GroES, plays an essential role in assisting protein folding. The GroEL-GroES system forms a nano-cage that allows encapsulation of the non-native substrate proteins and provides a physical environment optimized to promote and accelerate protein folding. The polypeptide is Chaperonin GroEL 1 (Synechococcus sp. (strain ATCC 27144 / PCC 6301 / SAUG 1402/1) (Anacystis nidulans)).